Consider the following 524-residue polypeptide: Solute carrier family 2, facilitated glucose transporter member 2 (524 aa).

At 1-6 the chain is on the cytoplasmic side; sequence MTEDKI. A helical membrane pass occupies residues 7–26; that stretch reads TGTLVFAVLTAVLGSFQFGY. The Extracellular segment spans residues 27 to 89; that stretch reads DIGVINAPQQ…SWAEEETTAS (63 aa). An N-linked (GlcNAc...) asparagine glycan is attached at N62. Residues 90–115 traverse the membrane as a helical segment; it reads ASLIIMLWSLSVSIFAIGGMIASFFG. Residues 116–126 are Cytoplasmic-facing; that stretch reads GMLGDRLGRIK. Residues 127-145 form a helical membrane-spanning segment; that stretch reads AMLVANILSLVGALLMWFS. The Extracellular portion of the chain corresponds to 146–150; that stretch reads KLGPS. A helical membrane pass occupies residues 151–176; sequence HILIISGRGISGLYCGLISGLVPMYI. Residues 177–187 lie on the Cytoplasmic side of the membrane; sequence GEIAPTKFRGA. The chain crosses the membrane as a helical span at residues 188-211; that stretch reads IGALHQLAIVTGILVSQIIGLDFL. Q193 lines the D-glucose pocket. Topologically, residues 212 to 216 are extracellular; the sequence is LGNHE. The helical transmembrane segment at 217–239 threads the bilayer; that stretch reads LWHILLGLSAVPAVLQSLMLFFC. The Cytoplasmic portion of the chain corresponds to 240 to 303; it reads PESPRYLYIK…LFTNSSYRQP (64 aa). The helical transmembrane segment at 304-327 threads the bilayer; sequence ILVALMLHMAQQFSGINGIFYYST. Residues 314 to 315 and N320 contribute to the D-glucose site; that span reads QQ. The Extracellular segment spans residues 328–338; that stretch reads SIFQTAGISQP. Residues 339 to 360 form a helical membrane-spanning segment; sequence VYATIGVGAINTIFTALSVFLV. N349 contributes to the D-glucose binding site. Residues 361–366 are Cytoplasmic-facing; the sequence is EKAGRR. A helical transmembrane segment spans residues 367–389; sequence SLFLIGMSGMFVCAIFMSVGLVL. The Extracellular segment spans residues 390–394; it reads LDKLP. A helical membrane pass occupies residues 395-413; it reads WMSYVSMTAIFLFVSFFEI. 2 residues coordinate D-glucose: E412 and W420. The Cytoplasmic segment spans residues 414–433; the sequence is GPGPIPWFMVAEFFSQGPRP. The chain crosses the membrane as a helical span at residues 434 to 458; the sequence is AALAMAAFSNWTCNFIIALCFQYIA. Residues 459–463 are Extracellular-facing; sequence DFCGP. The chain crosses the membrane as a helical span at residues 464 to 482; the sequence is YVFFLFAGVVLVFTLFTFF. The Cytoplasmic segment spans residues 483 to 524; that stretch reads KVPETKGKSFEEIAAEFQKKSGSAQSPKAAVEMEFLGATETV. T523 carries the post-translational modification Phosphothreonine.

This sequence belongs to the major facilitator superfamily. Sugar transporter (TC 2.A.1.1) family. Glucose transporter subfamily. Post-translationally, N-glycosylated; required for stability and retention at the cell surface of pancreatic beta cells.

Its subcellular location is the cell membrane. It catalyses the reaction D-glucose(out) = D-glucose(in). It carries out the reaction D-fructose(out) = D-fructose(in). The catalysed reaction is L-dehydroascorbate(out) = L-dehydroascorbate(in). The enzyme catalyses D-galactose(in) = D-galactose(out). With respect to regulation, D-glucose and maltose competitively inhibit fructose transport. D-glucose, D-fructose and maltose inhibit deoxyglucose transport. In terms of biological role, facilitative hexose transporter that mediates the transport of glucose, fructose and galactose. Likely mediates the bidirectional transfer of glucose across the plasma membrane of hepatocytes and is responsible for uptake of glucose by the beta cells; may comprise part of the glucose-sensing mechanism of the beta cell. May also participate with the Na(+)/glucose cotransporter in the transcellular transport of glucose in the small intestine and kidney. Also able to mediate the transport of dehydroascorbate. The sequence is that of Solute carrier family 2, facilitated glucose transporter member 2 from Sus scrofa (Pig).